Consider the following 165-residue polypeptide: Peptide methionine sulfoxide reductase MsrA (165 aa).

The active site involves Cys-11.

It belongs to the MsrA Met sulfoxide reductase family.

The enzyme catalyses L-methionyl-[protein] + [thioredoxin]-disulfide + H2O = L-methionyl-(S)-S-oxide-[protein] + [thioredoxin]-dithiol. It catalyses the reaction [thioredoxin]-disulfide + L-methionine + H2O = L-methionine (S)-S-oxide + [thioredoxin]-dithiol. In terms of biological role, has an important function as a repair enzyme for proteins that have been inactivated by oxidation. Catalyzes the reversible oxidation-reduction of methionine sulfoxide in proteins to methionine. The protein is Peptide methionine sulfoxide reductase MsrA of Ureaplasma urealyticum serovar 10 (strain ATCC 33699 / Western).